Here is a 391-residue protein sequence, read N- to C-terminus: Galactokinase (391 aa).

34–37 (EHTD) serves as a coordination point for substrate. 121–127 (GAGLSSS) contacts ATP. Residues serine 127 and glutamate 159 each contribute to the Mg(2+) site. The active-site Proton acceptor is the aspartate 171. Tyrosine 220 serves as a coordination point for substrate.

Belongs to the GHMP kinase family. GalK subfamily.

Its subcellular location is the cytoplasm. The enzyme catalyses alpha-D-galactose + ATP = alpha-D-galactose 1-phosphate + ADP + H(+). It participates in carbohydrate metabolism; galactose metabolism. In terms of biological role, catalyzes the transfer of the gamma-phosphate of ATP to D-galactose to form alpha-D-galactose-1-phosphate (Gal-1-P). The polypeptide is Galactokinase (Roseiflexus sp. (strain RS-1)).